A 211-amino-acid chain; its full sequence is Regulator of G-protein signaling 2 (211 aa).

Residues 32–66 (KMKRTLLKDWKTRLSYFLQNSSTPGKPKTGKKSKQ) are necessary for membrane association. Residues 79 to 116 (LWAEAFDELLASKYGLAAFRAFLKSEFCEENIEFWLAC) are necessary to inhibit protein synthesis. The RGS domain occupies 83–199 (AFDELLASKY…LESEFYQDLC (117 aa)).

As to quaternary structure, interacts with GNAQ. Does not interact with GNAI1 and GNAI3. Interacts with EIF2B5. Interacts with PRKG1 (isoform alpha). Phosphorylated by protein kinase C. Phosphorylation by PRKG1 leads to activation of RGS2 activity.

The protein resides in the cell membrane. It is found in the cytoplasm. The protein localises to the nucleus. It localises to the nucleolus. Regulates G protein-coupled receptor signaling cascades. Inhibits signal transduction by increasing the GTPase activity of G protein alpha subunits, thereby driving them into their inactive GDP-bound form. It is involved in the negative regulation of the angiotensin-activated signaling pathway. Plays a role in the regulation of blood pressure in response to signaling via G protein-coupled receptors and GNAQ. Plays a role in regulating the constriction and relaxation of vascular smooth muscle. Binds EIF2B5 and blocks its activity, thereby inhibiting the translation of mRNA into protein. The polypeptide is Regulator of G-protein signaling 2 (Rgs2) (Rattus norvegicus (Rat)).